The chain runs to 466 residues: Histidinol dehydrogenase, chloroplastic (466 aa).

The transit peptide at 1-30 (MSLNLSRLSLLSSPRISISTHAPRKGYVCC) directs the protein to the chloroplast. 3 residues coordinate NAD(+): Tyr-155, Gln-217, and Asn-240. Substrate-binding residues include Ser-266, Gln-288, and His-291. Zn(2+) contacts are provided by Gln-288 and His-291. Residues Glu-356 and His-357 each act as proton acceptor in the active site. Residues His-357, Asp-390, Glu-444, and His-449 each contribute to the substrate site. Position 390 (Asp-390) interacts with Zn(2+). His-449 contacts Zn(2+).

Belongs to the histidinol dehydrogenase family. It depends on Zn(2+) as a cofactor.

The protein localises to the plastid. Its subcellular location is the chloroplast. It catalyses the reaction L-histidinol + 2 NAD(+) + H2O = L-histidine + 2 NADH + 3 H(+). It participates in amino-acid biosynthesis; L-histidine biosynthesis; L-histidine from 5-phospho-alpha-D-ribose 1-diphosphate: step 9/9. In terms of biological role, catalyzes the sequential NAD-dependent oxidations of L-histidinol to L-histidinaldehyde and then to L-histidine. The polypeptide is Histidinol dehydrogenase, chloroplastic (HISN8) (Arabidopsis thaliana (Mouse-ear cress)).